The following is a 322-amino-acid chain: 4-hydroxy-3-methylbut-2-enyl diphosphate reductase 1 (322 aa).

Cys18 contacts [4Fe-4S] cluster. Residues His47 and His82 each contribute to the (2E)-4-hydroxy-3-methylbut-2-enyl diphosphate site. Residues His47 and His82 each coordinate dimethylallyl diphosphate. Isopentenyl diphosphate contacts are provided by His47 and His82. [4Fe-4S] cluster is bound at residue Cys104. His132 is a binding site for (2E)-4-hydroxy-3-methylbut-2-enyl diphosphate. A dimethylallyl diphosphate-binding site is contributed by His132. Residue His132 coordinates isopentenyl diphosphate. The active-site Proton donor is Glu134. Thr173 contributes to the (2E)-4-hydroxy-3-methylbut-2-enyl diphosphate binding site. Cys203 contributes to the [4Fe-4S] cluster binding site. (2E)-4-hydroxy-3-methylbut-2-enyl diphosphate-binding residues include Ser231, Ser232, Asn233, and Ser276. Dimethylallyl diphosphate contacts are provided by Ser231, Ser232, Asn233, and Ser276. The isopentenyl diphosphate site is built by Ser231, Ser232, Asn233, and Ser276.

This sequence belongs to the IspH family. [4Fe-4S] cluster is required as a cofactor.

It carries out the reaction isopentenyl diphosphate + 2 oxidized [2Fe-2S]-[ferredoxin] + H2O = (2E)-4-hydroxy-3-methylbut-2-enyl diphosphate + 2 reduced [2Fe-2S]-[ferredoxin] + 2 H(+). The enzyme catalyses dimethylallyl diphosphate + 2 oxidized [2Fe-2S]-[ferredoxin] + H2O = (2E)-4-hydroxy-3-methylbut-2-enyl diphosphate + 2 reduced [2Fe-2S]-[ferredoxin] + 2 H(+). It participates in isoprenoid biosynthesis; dimethylallyl diphosphate biosynthesis; dimethylallyl diphosphate from (2E)-4-hydroxy-3-methylbutenyl diphosphate: step 1/1. The protein operates within isoprenoid biosynthesis; isopentenyl diphosphate biosynthesis via DXP pathway; isopentenyl diphosphate from 1-deoxy-D-xylulose 5-phosphate: step 6/6. Its function is as follows. Catalyzes the conversion of 1-hydroxy-2-methyl-2-(E)-butenyl 4-diphosphate (HMBPP) into a mixture of isopentenyl diphosphate (IPP) and dimethylallyl diphosphate (DMAPP). Acts in the terminal step of the DOXP/MEP pathway for isoprenoid precursor biosynthesis. This is 4-hydroxy-3-methylbut-2-enyl diphosphate reductase 1 from Bradyrhizobium diazoefficiens (strain JCM 10833 / BCRC 13528 / IAM 13628 / NBRC 14792 / USDA 110).